Consider the following 480-residue polypeptide: Ribosomal RNA small subunit methyltransferase F (480 aa).

Residues 126–132 (AAAPGSK), Glu150, Asp177, and Asp195 each bind S-adenosyl-L-methionine. Cys248 serves as the catalytic Nucleophile.

This sequence belongs to the class I-like SAM-binding methyltransferase superfamily. RsmB/NOP family.

Its subcellular location is the cytoplasm. It catalyses the reaction cytidine(1407) in 16S rRNA + S-adenosyl-L-methionine = 5-methylcytidine(1407) in 16S rRNA + S-adenosyl-L-homocysteine + H(+). Functionally, specifically methylates the cytosine at position 1407 (m5C1407) of 16S rRNA. The protein is Ribosomal RNA small subunit methyltransferase F of Cronobacter sakazakii (strain ATCC BAA-894) (Enterobacter sakazakii).